The chain runs to 554 residues: Undecaprenyl phosphate-alpha-4-amino-4-deoxy-L-arabinose arabinosyl transferase (554 aa).

11 helical membrane passes run 4-24, 87-107, 115-135, 178-198, 206-226, 262-282, 293-313, 315-335, 352-372, 384-404, and 410-430; these read LKGS…LLPI, FGSI…ATLL, FLAA…SYAV, FMTK…PIVI, LIIF…PWAL, YLPI…AALL, ELFF…VAKG, LPTY…AYAT, INLI…MGWV, QKVI…FATM, and HWHW…YLIP.

Belongs to the glycosyltransferase 83 family.

The protein resides in the cell inner membrane. The catalysed reaction is 4-amino-4-deoxy-alpha-L-arabinopyranosyl di-trans,octa-cis-undecaprenyl phosphate + lipid IVA = lipid IIA + di-trans,octa-cis-undecaprenyl phosphate.. It participates in lipopolysaccharide metabolism; 4-amino-4-deoxy-beta-L-arabinose-lipid A biosynthesis. Its function is as follows. Catalyzes the transfer of the L-Ara4N moiety of the glycolipid undecaprenyl phosphate-alpha-L-Ara4N to lipid A. The modified arabinose is attached to lipid A and is required for resistance to polymyxin and cationic antimicrobial peptides. This is Undecaprenyl phosphate-alpha-4-amino-4-deoxy-L-arabinose arabinosyl transferase from Yersinia enterocolitica serotype O:8 / biotype 1B (strain NCTC 13174 / 8081).